A 300-amino-acid chain; its full sequence is L-threonine kinase (300 aa).

92–102 (PVAKGMASSTA) lines the ATP pocket.

This sequence belongs to the GHMP kinase family. PduX subfamily.

Its subcellular location is the cytoplasm. It catalyses the reaction L-threonine + ATP = O-phospho-L-threonine + ADP + H(+). Its pathway is cofactor biosynthesis; adenosylcobalamin biosynthesis. It functions in the pathway polyol metabolism; 1,2-propanediol degradation. In terms of biological role, L-threonine kinase that catalyzes the conversion of L-threonine to L-threonine-O-3-phosphate. Involved in the de novo synthesis of adenosylcobalamin (coenzyme B12) and the assimilation of cobyric acid. Uses ATP; the activity with CTP, GTP or UTP is 6, 11, and 3% of the activity with ATP, respectively. Its function is as follows. The 1,2-propanediol (1,2-PD)-specific bacterial microcompartment (BMC) concentrates low levels of 1,2-PD catabolic enzymes, concentrates volatile reaction intermediates thus enhancing pathway flux and keeps the level of toxic, mutagenic propionaldehyde low. This gene probably benefits from its induction via the Pdu promoter, rather than a physical interaction with the BMC. This Salmonella typhimurium (strain LT2 / SGSC1412 / ATCC 700720) protein is L-threonine kinase.